Consider the following 326-residue polypeptide: Nuclear egress protein 1 (326 aa).

The CCCH-type zinc-finger motif lies at 115–244; it reads CLSLSGMGYY…YAVFPTKSVH (130 aa).

It belongs to the herpesviridae NEC1 protein family. As to quaternary structure, forms a heterohexameric complex with NEC2. Interacts with capsid vertex specific component 2/CVC2; this interaction directs the capsid to the host inner nuclear membrane to initiate budding. Post-translationally, phosphorylated at serine residues in the N-terminus. This phosphorylation regulates the localization within the inner nuclear membrane.

It is found in the host nucleus inner membrane. In terms of biological role, plays an essential role in virion nuclear egress, the first step of virion release from infected cell. Within the host nucleus, NEC1 interacts with the newly formed capsid through the vertexes and directs it to the inner nuclear membrane by associating with NEC2. Induces the budding of the capsid at the inner nuclear membrane as well as its envelopment into the perinuclear space. There, the NEC1/NEC2 complex promotes the fusion of the enveloped capsid with the outer nuclear membrane and the subsequent release of the viral capsid into the cytoplasm where it will reach the secondary budding sites in the host Golgi or trans-Golgi network. This Equine herpesvirus 1 (strain Ab4p) (EHV-1) protein is Nuclear egress protein 1.